A 479-amino-acid chain; its full sequence is MKEKEYRTASAARGGLLFMRDIPGGAFGERVIVKDHRGRRRNGQVIFTSGEVVLVQVFEGTDDLDLERTWVRFLEEPFEIPLSPDVLGRIFDGVGAPRDDRPPMIAPLKRNVNGAPVNPVARAYPQEFIQTGIAAIDGLNSLVRGQKLPIFSGSGLPHNRLAAQIVRQAKLLGEETRFVMVFAAMGVTYSDARFFQEEFENSGVLGKVVMYLNLADDPPIKRLLLPRTALACAEYLAFEQDLHVLVVMTDMTHYAEALREVATAKGDVPSRKGYPGYLYSDLAEIYERAGRIKNRRGSITMVPVVSMPSDDITHPIPDLTGYITEGQIVLSRELHHQGIYPPVNIPPSLSRLMKDGIGKNSTREDHPRVASQLYAAYAKALEVRNLASIIGAEELSPSDRQFLDFAGQFEQRFVKQGEEEDRSIIETLDLAWDLLSLLPQFALTRVTEADLAKYHKWEGDSEREAPKMDSPHEEISEKS.

The disordered stretch occupies residues 458–479; that stretch reads EGDSEREAPKMDSPHEEISEKS.

The protein belongs to the ATPase alpha/beta chains family.

Produces ATP from ADP in the presence of a proton gradient across the membrane. The V-type beta chain is a regulatory subunit. This chain is V-type ATP synthase beta chain, found in Nitrosococcus oceani (strain ATCC 19707 / BCRC 17464 / JCM 30415 / NCIMB 11848 / C-107).